The following is a 342-amino-acid chain: Sideroflexin-5 (342 aa).

Positions 1–24 (MADTATTASAASAAASASNASSDA) are enriched in low complexity. Residues 1-29 (MADTATTASAASAAASASNASSDAPPFQL) are disordered. The next 4 membrane-spanning stretches (helical) occupy residues 105–125 (IFMP…VVGL), 165–185 (FIQG…GLNV), 256–276 (LTRV…MSML), and 289–309 (LLPV…PLAI).

Belongs to the sideroflexin family. Specifically expressed in the brain.

Its subcellular location is the mitochondrion inner membrane. It carries out the reaction citrate(in) = citrate(out). Mitochondrial amino-acid transporter. Transports citrate. Does not act as a serine transporter: not able to mediate transport of serine into mitochondria. In brown adipose tissue, plays a role in the regulation of UCP1-dependent thermogenesis probably by supporting mitochondrial glycerol-3-phosphate utilization. The protein is Sideroflexin-5 of Rattus norvegicus (Rat).